A 212-amino-acid chain; its full sequence is Sentrin-specific protease 8 (212 aa).

Position 1 is an N-acetylmethionine (methionine 1). Residues 11-174 form a protease region; the sequence is SLLRQSDVSL…MYVICNTEAL (164 aa). Catalysis depends on residues histidine 102 and aspartate 119. Residue cysteine 163 is the Nucleophile of the active site.

The protein belongs to the peptidase C48 family. Broadly expressed, with highest levels in kidney and pancreas.

In terms of biological role, protease that catalyzes two essential functions in the NEDD8 pathway: processing of full-length NEDD8 to its mature form and deconjugation of NEDD8 from targeted proteins such as cullins or p53. The chain is Sentrin-specific protease 8 (SENP8) from Homo sapiens (Human).